A 378-amino-acid polypeptide reads, in one-letter code: Chaperone protein DnaJ (378 aa).

The region spanning 5–70 (DYYETLGVSQ…QKRAAYDQYG (66 aa)) is the J domain. A CR-type zinc finger spans residues 134–212 (GKSLEIKVPT…CRGQGRVEKT (79 aa)). Zn(2+)-binding residues include Cys-147, Cys-150, Cys-164, Cys-167, Cys-186, Cys-189, Cys-200, and Cys-203. CXXCXGXG motif repeat units follow at residues 147–154 (CEPCDGSG), 164–171 (CSTCHGHG), 186–193 (CPTCSGKG), and 200–207 (CTSCRGQG).

Belongs to the DnaJ family. As to quaternary structure, homodimer. Requires Zn(2+) as cofactor.

The protein resides in the cytoplasm. Functionally, participates actively in the response to hyperosmotic and heat shock by preventing the aggregation of stress-denatured proteins and by disaggregating proteins, also in an autonomous, DnaK-independent fashion. Unfolded proteins bind initially to DnaJ; upon interaction with the DnaJ-bound protein, DnaK hydrolyzes its bound ATP, resulting in the formation of a stable complex. GrpE releases ADP from DnaK; ATP binding to DnaK triggers the release of the substrate protein, thus completing the reaction cycle. Several rounds of ATP-dependent interactions between DnaJ, DnaK and GrpE are required for fully efficient folding. Also involved, together with DnaK and GrpE, in the DNA replication of plasmids through activation of initiation proteins. This Colwellia psychrerythraea (strain 34H / ATCC BAA-681) (Vibrio psychroerythus) protein is Chaperone protein DnaJ.